The sequence spans 2134 residues: Tudor domain-containing protein 6 (2134 aa).

The disordered stretch occupies residues 287–315 (RAPVGTDDEDSGSATWEEREESPDKPGSP). The residue at position 292 (T292) is a Phosphothreonine. 4 consecutive Tudor domains span residues 309–368 (PDKP…YFRM), 542–599 (RPEP…FRQL), 820–879 (YEGD…FFQV), and 1038–1092 (TLAP…AHDV). The segment at 1271–1296 (SPMSGTKLDSALPERRMGEPSGRDLP) is disordered. A compositionally biased stretch (basic and acidic residues) spans 1282-1296 (LPERRMGEPSGRDLP). Tudor domains lie at 1358–1417 (QWQS…DAVL) and 1570–1630 (CPQI…LLLV). Disordered stretches follow at residues 1699-1733 (KKYA…GLKK) and 1860-1885 (LQHS…LSPG). Residues 1711-1722 (LSSEKRGPERKG) show a composition bias toward basic and acidic residues. Phosphoserine occurs at positions 1723 and 1726. Position 1925 is a phosphoserine (S1925). Residues 1930 to 1939 (AVSQDIQGSR) are compositionally biased toward polar residues. Residues 1930–1985 (AVSQDIQGSRCSEDERKAGYMGSSDDDHSRSPLLQHGKGGNSPAHDGRNLSEEEFP) form a disordered region. A phosphoserine mark is found at S1980, S2063, and S2115.

As to quaternary structure, found in a mRNP complex (i.e. messenger ribonucleoproteins which correspond to mRNA with bound proteins), at least composed of TDRD1, TDRD6, TDRD7 and DDX4. Found in a complex, at least composed of PIWIL1, PIWIL2, DDX4 and TDRD6. Interacts with Tex19.1 and probably Tex19.2. Interacts with PRMT5. Interacts with SNRPB (when methylated); to trigger spliceosome formation. Post-translationally, undergoes proteolytic cleavage near the C-terminal by an unknown protease during the transition from meiosis I to meiosis II in primary spermatocytes. As to expression, testis specific. Expressed in primary spermatocytes at post natal (PN) day 17.5. Expressed in midpachytene stage of primary spermatocytes at PN16 and in round spermatids at PN22 (at protein level).

Its subcellular location is the cytoplasm. Its function is as follows. Tudor domain-containing protein involved in germ cell development, more specifically the formation of chromatoid body (during spermiogenesis), Balbiani body (during oogenesis), germ plasm (upon fertilization), and for proper miRNA expression and spliceosome maturation. Essential for RNA-dependent helicase UPF1 localization to chromatoid body, for UPF1-UPF2 and UPF1-DDX4 interactions which are required for mRNA degradation, using the extended 3' UTR-triggered nonsense-mediated mRNA decay (NMD) pathway. Involved in spliceosome maturation and mRNA splicing in prophase I spermatocytes through interaction with arginine N-methyltransferase PRMT5 and symmetrically arginine dimethylated SNRPB (small nuclear ribonucleoprotein-associated protein). The polypeptide is Tudor domain-containing protein 6 (Mus musculus (Mouse)).